Here is a 239-residue protein sequence, read N- to C-terminus: MKSGKFQTKGFKFKQFCIEGGESGMPVSTDGVMLGAWMESPSPAHILDIGTGTGLLALMCAQRFPDAKITAVDIETTAVEAASHNFSHSPWHDRLSVQHTDVLIFSPPQRFQRIVCNPPYFNTGEQAKQSQRATARHTDSLRHDALLKCCYQLLDAEGKASFVLPITEGELFIELALTQGWSLSRLCRVQPSEKKPVHRLLFELAKQPCDTQESHLIIHSSDGYSDDFVRLTHEFYLKM.

It belongs to the methyltransferase superfamily. tRNA (adenine-N(6)-)-methyltransferase family.

The protein localises to the cytoplasm. It carries out the reaction adenosine(37) in tRNA1(Val) + S-adenosyl-L-methionine = N(6)-methyladenosine(37) in tRNA1(Val) + S-adenosyl-L-homocysteine + H(+). Functionally, specifically methylates the adenine in position 37 of tRNA(1)(Val) (anticodon cmo5UAC). This Vibrio parahaemolyticus serotype O3:K6 (strain RIMD 2210633) protein is tRNA1(Val) (adenine(37)-N6)-methyltransferase.